The primary structure comprises 364 residues: Phosphoserine aminotransferase (364 aa).

An L-glutamate-binding site is contributed by R42. Pyridoxal 5'-phosphate is bound by residues 76 to 77 (GR), W102, T156, D175, and Q198. K199 is modified (N6-(pyridoxal phosphate)lysine). 240 to 241 (NT) lines the pyridoxal 5'-phosphate pocket.

This sequence belongs to the class-V pyridoxal-phosphate-dependent aminotransferase family. SerC subfamily. As to quaternary structure, homodimer. It depends on pyridoxal 5'-phosphate as a cofactor.

Its subcellular location is the cytoplasm. The enzyme catalyses O-phospho-L-serine + 2-oxoglutarate = 3-phosphooxypyruvate + L-glutamate. The catalysed reaction is 4-(phosphooxy)-L-threonine + 2-oxoglutarate = (R)-3-hydroxy-2-oxo-4-phosphooxybutanoate + L-glutamate. The protein operates within amino-acid biosynthesis; L-serine biosynthesis; L-serine from 3-phospho-D-glycerate: step 2/3. It functions in the pathway cofactor biosynthesis; pyridoxine 5'-phosphate biosynthesis; pyridoxine 5'-phosphate from D-erythrose 4-phosphate: step 3/5. Functionally, catalyzes the reversible conversion of 3-phosphohydroxypyruvate to phosphoserine and of 3-hydroxy-2-oxo-4-phosphonooxybutanoate to phosphohydroxythreonine. In Shewanella woodyi (strain ATCC 51908 / MS32), this protein is Phosphoserine aminotransferase.